A 994-amino-acid polypeptide reads, in one-letter code: Translation initiation factor IF-2 (994 aa).

Composition is skewed to polar residues over residues 1–10 and 28–40; these read MSDENNNGRN and SVSSGTVKQSFSH. The tract at residues 1–405 is disordered; that stretch reads MSDENNNGRN…REKRKGGAQE (405 aa). Over residues 76–91 the composition is skewed to low complexity; it reads PQKPAGPAQAPRAPQG. Positions 98–131 are enriched in basic and acidic residues; the sequence is AEERAARQRAIELARQQEADRRAREERARAEAEA. The span at 132-146 shows a compositional bias: low complexity; it reads ARAAQQKAAQAAAEP. Residues 147–157 are compositionally biased toward pro residues; that stretch reads PAAPPPAPAAP. A compositionally biased stretch (low complexity) spans 158–172; sequence PAAAAPAAPAAEAAP. The segment covering 173–188 has biased composition (pro residues); the sequence is APKPAPSPRPVPPSAP. Over residues 189–204 the composition is skewed to low complexity; that stretch reads APQAARPAAEAPPRQA. Composition is skewed to basic and acidic residues over residues 216-235 and 247-273; these read PDRRDDRPSTTTYRPERPSN and PRRDDDRGPRPPRRDDDRGPRRDDRPQ. Residues 298-310 are compositionally biased toward gly residues; the sequence is RGPGGPRGPGGPR. Basic and acidic residues-rich tracts occupy residues 336 to 350 and 390 to 402; these read VDRRPDEDDRRRDPG and RAREREREKRKGG. One can recognise a tr-type G domain in the interval 492–662; sequence PRPPVVAVMG…LLQAEVLDLK (171 aa). The segment at 501–508 is G1; it reads GHVDHGKT. 501–508 is a GTP binding site; the sequence is GHVDHGKT. Residues 526–530 are G2; sequence GITQH. The tract at residues 548-551 is G3; sequence DTPG. GTP is bound by residues 548–552 and 602–605; these read DTPGH and NKID. The G4 stretch occupies residues 602-605; the sequence is NKID. Positions 638-640 are G5; that stretch reads SAT.

This sequence belongs to the TRAFAC class translation factor GTPase superfamily. Classic translation factor GTPase family. IF-2 subfamily.

Its subcellular location is the cytoplasm. Its function is as follows. One of the essential components for the initiation of protein synthesis. Protects formylmethionyl-tRNA from spontaneous hydrolysis and promotes its binding to the 30S ribosomal subunits. Also involved in the hydrolysis of GTP during the formation of the 70S ribosomal complex. This chain is Translation initiation factor IF-2, found in Phenylobacterium zucineum (strain HLK1).